The sequence spans 115 residues: Putative HNH nuclease YajD (115 aa).

The 49-residue stretch at 27–75 (CGRCSREFVYSNLRELTVHHIDHDHTNNPEDGSNWELLCLYCHDHEHSK) folds into the HNH domain.

It belongs to the HNH nuclease family.

This Salmonella typhi protein is Putative HNH nuclease YajD (yajD).